A 466-amino-acid polypeptide reads, in one-letter code: Delta-1 crystallin (466 aa).

Ala2 is modified (blocked amino end (Ala)).

It belongs to the lyase 1 family. Argininosuccinate lyase subfamily. Homotetramer. The N-terminus is blocked. Eye lens.

In terms of biological role, delta crystallin, the principal crystallin in embryonic lens, is found only in birds and reptiles. This is Delta-1 crystallin (ASL1) from Gallus gallus (Chicken).